We begin with the raw amino-acid sequence, 786 residues long: Pentatricopeptide repeat-containing protein 10, chloroplastic (786 aa).

A disordered region spans residues Met-1 to Phe-71. The transit peptide at Met-1–Leu-95 directs the protein to the chloroplast. Over residues Pro-27–Ser-36 the composition is skewed to pro residues. Residues Ser-37–Pro-50 are compositionally biased toward low complexity. 18 PPR repeats span residues Asp-137–Pro-167, Asp-173–Pro-207, Thr-208–Pro-243, Asp-244–Pro-278, Cys-279–Pro-313, Asp-314–Pro-348, Asn-349–Pro-383, Asn-384–Pro-418, Asn-419–Leu-453, Ser-454–Pro-488, Cys-489–Pro-523, Asn-524–Phe-558, Ser-560–Pro-594, Asp-595–Pro-629, Asp-630–Lys-664, Asp-666–Pro-700, Cys-701–Pro-735, and Met-736–Phe-770.

This sequence belongs to the PPR family. P subfamily. As to quaternary structure, forms homodimers.

It is found in the plastid. The protein resides in the chloroplast stroma. Involved in chloroplast mRNA stability. Binds specifically to two intergenic RNA regions of similar sequence located in the chloroplast atpH 5'-UTR and psaJ 3'-UTR, and serves as a barrier to RNA decay. Binding to a specific site in the intergenic region of the chloroplast atpH is sufficient to block 5'-3' and 3'-5' exonucleases. Acts as a protein barrier to block mRNA degradation by exonucleases, and defines processed mRNA termini in chloroplasts. Remodels the structure of the atpH ribosome-binding site in a manner that can account for its ability to enhance translation. Stabilizes a RNA 3'-end downstream from psaI. Binds atpH RNA as a monomer. This Zea mays (Maize) protein is Pentatricopeptide repeat-containing protein 10, chloroplastic.